A 297-amino-acid chain; its full sequence is Homoserine kinase (297 aa).

82 to 92 contributes to the ATP binding site; the sequence is PLTRGLGSSAS.

Belongs to the GHMP kinase family. Homoserine kinase subfamily.

It localises to the cytoplasm. The catalysed reaction is L-homoserine + ATP = O-phospho-L-homoserine + ADP + H(+). Its pathway is amino-acid biosynthesis; L-threonine biosynthesis; L-threonine from L-aspartate: step 4/5. In terms of biological role, catalyzes the ATP-dependent phosphorylation of L-homoserine to L-homoserine phosphate. This chain is Homoserine kinase, found in Bacillus cereus (strain ATCC 14579 / DSM 31 / CCUG 7414 / JCM 2152 / NBRC 15305 / NCIMB 9373 / NCTC 2599 / NRRL B-3711).